We begin with the raw amino-acid sequence, 2082 residues long: Probable ATP-dependent helicase PF08_0048 (2082 aa).

The HSA domain maps to 66 to 138 (KIVEPAKTPE…EEKRLKLYSK (73 aa)). The segment covering 209-221 (NNSEIVNNNASSV) has biased composition (low complexity). 2 disordered regions span residues 209–234 (NNSE…DDLT) and 301–470 (NVIE…SPTR). 2 stretches are compositionally biased toward basic and acidic residues: residues 419-448 (NSDH…HIDN) and 455-465 (TGEDYKSDKEN). A coiled-coil region spans residues 476 to 531 (KKEKYDEYDTKLKIEKREEENKNYEKDEHEYESDNYDKEKINKKKELILLKNDIEN). Residues 532–641 (DSDETSEHIK…KNDSDDNDDI (110 aa)) form a disordered region. Positions 536–545 (TSEHIKRDSR) are enriched in basic and acidic residues. Over residues 579–598 (DNNNSENDNNNDNNNDNNND) the composition is skewed to low complexity. The span at 599–627 (NNDDNNDDNNDDNNDDNNDDNNDDNNDDN) shows a compositional bias: acidic residues. The Helicase ATP-binding domain maps to 674–839 (LYLYKNNING…WSLLHFLMPN (166 aa)). Residue 687-694 (DEMGLGKT) coordinates ATP. A DEAH box motif is present at residues 790-793 (DEAH). Residues 1199 to 1255 (EQNNNNSKDNNNNIDNNNNIDNNNNIDNNNNIDNNNNIDNNNNNIDNNNNIDNHHNN) are disordered. A Helicase C-terminal domain is found at 1772-1922 (ALEKLLSKCK…NICINMGNFN (151 aa)). Residues 1972 to 2060 (EQVENKDKMN…DEMRMKIEIE (89 aa)) adopt a coiled-coil conformation.

It belongs to the SNF2/RAD54 helicase family. SWR1 subfamily. In terms of assembly, component of a chromatin-remodeling complex.

Its subcellular location is the nucleus. Functionally, catalytic component of a chromatin remodeling complex. In Plasmodium falciparum (isolate 3D7), this protein is Probable ATP-dependent helicase PF08_0048.